Here is a 407-residue protein sequence, read N- to C-terminus: Phosphonoacetate hydrolase (407 aa).

Zn(2+) contacts are provided by D25, T64, D202, H206, D241, H242, and H368. Residues T64 and D202 each contribute to the substrate site. Residues H242 and H368 each coordinate substrate.

The protein belongs to the alkaline phosphatase family. PhnA subfamily. In terms of assembly, homodimer. The cofactor is Zn(2+).

The enzyme catalyses phosphonoacetate + H2O = acetate + phosphate + H(+). With respect to regulation, completely inhibited by EDTA and 1,10-phenanthroline. Moderately inhibited by the phosphonocarboxylic acids phosphonoformate and 3-phosphonopropionate and the phosphonate herbicide glyphosate. Partially inhibited by the reducing agents sodium sulfide and dithiotheitol and the chelating agent iminodiacetate. Nonphosphonate analogs of phosphonoacetate, such as arsonoacetate, sulfonoacetate and malonate are poor inhibitors. Inorganic phosphate, acetate and the known phosphonotase inhibitor phosphite have little effect on activity. Not inhibited by the alkylphosphonic acids methylphosphonate and ethylphosphonate, or the aminoalkylphosphonates 2-aminoethylphosphonate, 3-aminopropylphosphonate and 4-aminobutylphosphonate. Fe(3+), Ca(2+), Mg(2+) and Cs(+) have no effect on activity. Activity is slightly increased by the aminoalkylphosphonates 1-aminoethylphosphonate, 1-aminobutylphosphonate, 2-amino-4-butylphosphonate. Activity is increased by Zn(2+), Mn(2+) and Co(2+), these 3 metal ions also allow recovery of activity after EDTA treatment. Functionally, specifically hydrolyzes phosphonoacetate. Does not have activity on other organophosphonates or acetates. The chain is Phosphonoacetate hydrolase from Pseudomonas fluorescens.